We begin with the raw amino-acid sequence, 179 residues long: Large ribosomal subunit protein uL5 (179 aa).

It belongs to the universal ribosomal protein uL5 family. Part of the 50S ribosomal subunit; part of the 5S rRNA/L5/L18/L25 subcomplex. Contacts the 5S rRNA and the P site tRNA. Forms a bridge to the 30S subunit in the 70S ribosome.

Its function is as follows. This is one of the proteins that bind and probably mediate the attachment of the 5S RNA into the large ribosomal subunit, where it forms part of the central protuberance. In the 70S ribosome it contacts protein S13 of the 30S subunit (bridge B1b), connecting the 2 subunits; this bridge is implicated in subunit movement. Contacts the P site tRNA; the 5S rRNA and some of its associated proteins might help stabilize positioning of ribosome-bound tRNAs. In Rickettsia peacockii (strain Rustic), this protein is Large ribosomal subunit protein uL5.